Here is a 350-residue protein sequence, read N- to C-terminus: Putative deoxyribonuclease-2 (350 aa).

The protein belongs to the DNase II family.

The chain is Putative deoxyribonuclease-2 from Burkholderia thailandensis (strain ATCC 700388 / DSM 13276 / CCUG 48851 / CIP 106301 / E264).